A 359-amino-acid polypeptide reads, in one-letter code: Peptide chain release factor 1 (359 aa).

Residue Gln-236 is modified to N5-methylglutamine.

It belongs to the prokaryotic/mitochondrial release factor family. In terms of processing, methylated by PrmC. Methylation increases the termination efficiency of RF1.

Its subcellular location is the cytoplasm. Peptide chain release factor 1 directs the termination of translation in response to the peptide chain termination codons UAG and UAA. This is Peptide chain release factor 1 from Streptococcus pneumoniae (strain Hungary19A-6).